The sequence spans 449 residues: Trigger factor (449 aa).

A PPIase FKBP-type domain is found at 172 to 257; it reads GDRVTVDFVG…LKQVEWAHLP (86 aa).

Belongs to the FKBP-type PPIase family. Tig subfamily.

The protein localises to the cytoplasm. The enzyme catalyses [protein]-peptidylproline (omega=180) = [protein]-peptidylproline (omega=0). In terms of biological role, involved in protein export. Acts as a chaperone by maintaining the newly synthesized protein in an open conformation. Functions as a peptidyl-prolyl cis-trans isomerase. This is Trigger factor from Ralstonia nicotianae (strain ATCC BAA-1114 / GMI1000) (Ralstonia solanacearum).